We begin with the raw amino-acid sequence, 198 residues long: Na(+)-translocating NADH-quinone reductase subunit E (198 aa).

6 consecutive transmembrane segments (helical) span residues 11–31, 39–59, 77–97, 110–130, 140–160, and 176–196; these read SIFIENMALSFFLGMCTFLAV, FGLGVAVVVVLTIAVPVNNLV, FLNFITFIGVIAALVQILEMV, GIFLPLITVNCAIFGGVSFMV, IVYGFGSGVGWMLAIVALAGI, and LGITFITVGLMALGFMSFSGV.

This sequence belongs to the NqrDE/RnfAE family. Composed of six subunits; NqrA, NqrB, NqrC, NqrD, NqrE and NqrF.

The protein resides in the cell inner membrane. The catalysed reaction is a ubiquinone + n Na(+)(in) + NADH + H(+) = a ubiquinol + n Na(+)(out) + NAD(+). NQR complex catalyzes the reduction of ubiquinone-1 to ubiquinol by two successive reactions, coupled with the transport of Na(+) ions from the cytoplasm to the periplasm. NqrA to NqrE are probably involved in the second step, the conversion of ubisemiquinone to ubiquinol. This is Na(+)-translocating NADH-quinone reductase subunit E from Vibrio campbellii (strain ATCC BAA-1116).